A 633-amino-acid polypeptide reads, in one-letter code: Uracil permease (633 aa).

12 helical membrane passes run 143–163 (WWQCWITIWIGYGFVGAFVVL), 173–193 (LSFPISSRASFGIFFSLWPVI), 197–217 (VMAIVWYSVQAYIAATPVSLM), 242–262 (YEFMCFFIFWAASLPFLLVPP), 268–288 (LFTVKAVLVPFASFGFLIWAI), 310–330 (FSWAFLRSLMGCMANFSTMVI), 350–370 (LVCIPFLFSITCLIGILVTAA), 400–420 (AGVFLISFVFAVAQLGTNISA), 442–462 (GSLFCAAMALCICPWNLMATS), 465–485 (FTMALSAYAIFLSSIAGVVCS), 521–541 (ALAAYLCGVAPCLPGFIAEVG), and 559–579 (YWVGYGLSFSSYTALCYFFPV).

It belongs to the purine-cytosine permease (2.A.39) family. Glycosylated (possible); but there is not yet direct biochemical evidence for it.

The protein localises to the membrane. Transport of uracil. This is Uracil permease (FUR4) from Saccharomyces cerevisiae (strain ATCC 204508 / S288c) (Baker's yeast).